The primary structure comprises 228 residues: Biosynthetic peptidoglycan transglycosylase (228 aa).

The chain crosses the membrane as a helical span at residues 8–28 (ILAALVAAFLLYNLWVLGHII).

This sequence belongs to the glycosyltransferase 51 family.

The protein resides in the cell inner membrane. The enzyme catalyses [GlcNAc-(1-&gt;4)-Mur2Ac(oyl-L-Ala-gamma-D-Glu-L-Lys-D-Ala-D-Ala)](n)-di-trans,octa-cis-undecaprenyl diphosphate + beta-D-GlcNAc-(1-&gt;4)-Mur2Ac(oyl-L-Ala-gamma-D-Glu-L-Lys-D-Ala-D-Ala)-di-trans,octa-cis-undecaprenyl diphosphate = [GlcNAc-(1-&gt;4)-Mur2Ac(oyl-L-Ala-gamma-D-Glu-L-Lys-D-Ala-D-Ala)](n+1)-di-trans,octa-cis-undecaprenyl diphosphate + di-trans,octa-cis-undecaprenyl diphosphate + H(+). It participates in cell wall biogenesis; peptidoglycan biosynthesis. Its function is as follows. Peptidoglycan polymerase that catalyzes glycan chain elongation from lipid-linked precursors. This Chromobacterium violaceum (strain ATCC 12472 / DSM 30191 / JCM 1249 / CCUG 213 / NBRC 12614 / NCIMB 9131 / NCTC 9757 / MK) protein is Biosynthetic peptidoglycan transglycosylase.